A 280-amino-acid chain; its full sequence is F-actin-capping protein subunit alpha (280 aa).

It belongs to the F-actin-capping protein alpha subunit family. Heterodimer of an alpha and a beta subunit.

The protein resides in the cytoplasm. It localises to the cytoskeleton. Its function is as follows. F-actin-capping proteins bind in a Ca(2+)-independent manner to the fast growing ends of actin filaments (barbed end) thereby blocking the exchange of subunits at these ends. Unlike other capping proteins (such as gelsolin and severin), these proteins do not sever actin filaments. The protein is F-actin-capping protein subunit alpha (CAP01) of Candida albicans (strain SC5314 / ATCC MYA-2876) (Yeast).